Reading from the N-terminus, the 1150-residue chain is Apomucin (1150 aa).

Low complexity-rich tracts occupy residues 1-36 (ETAR…TGAS) and 46-79 (SVAG…SSVG). Tandem repeats lie at residues 1–44 (ETAR…ETSR), 45–125 (ISVA…ETSR), 126–206 (ISVA…ETSR), 207–287 (ISVA…ETSR), and 288–368 (ISVA…ETSR). The segment at 1–368 (ETARPSVAGS…ASIGQPETSR (368 aa)) is 6 X 81 AA tandem repeats. Disordered regions lie at residues 1–730 (ETAR…KTGI) and 776–925 (APGS…PAPL). Residues Ser46, Ser50, Ser51, Ser57, Ser58, and Ser61 are each glycosylated (O-linked (GalNAc...) serine; partial). O-linked (GalNAc...) threonine; partial glycosylation occurs at Thr66. Ser67 is a glycosylation site (O-linked (GalNAc...) serine; partial). Thr73 and Thr74 each carry an O-linked (GalNAc...) threonine; partial glycan. Residues Ser76 and Ser77 are each glycosylated (O-linked (GalNAc...) serine; partial). Residues Thr81 and Thr83 are each glycosylated (O-linked (GalNAc...) threonine; partial). Residues 86 to 117 (PSVAGSGTTGTVSGASGSTGSSSGSPGATGAS) show a composition bias toward low complexity. O-linked (GalNAc...) serine; partial glycosylation is found at Ser87 and Ser91. O-linked (GalNAc...) threonine; partial glycosylation is found at Thr93, Thr94, and Thr96. Residues Ser98, Ser101, and Ser103 are each glycosylated (O-linked (GalNAc...) serine; partial). O-linked (GalNAc...) threonine; partial glycosylation is present at Thr104. O-linked (GalNAc...) serine; partial glycans are attached at residues Ser106, Ser107, Ser108, and Ser110. O-linked (GalNAc...) threonine; partial glycosylation is present at Thr114. A glycan (O-linked (GalNAc...) serine; partial) is linked at Ser117. The O-linked (GalNAc...) threonine; partial glycan is linked to Thr123. O-linked (GalNAc...) serine; partial glycosylation occurs at Ser124. Low complexity-rich tracts occupy residues 127–160 (SVAG…SSVG), 167–198 (PSVA…TGAS), 208–241 (SVAG…SSVG), 248–279 (PSVA…TGAS), 289–322 (SVAG…SSVG), 329–360 (PSVA…TGAS), and 370–396 (SVAG…ATTS). The stretch at 369 to 391 (ISVAGSSGAPAVSSGASQAAGTS) is one 6; truncated repeat. N-linked (GlcNAc...) asparagine glycosylation occurs at Asn418. Residues 442–459 (SYNTEATTSIGRSGTTHT) are compositionally biased toward polar residues. Positions 473 to 506 (SHSSQSSKPGSSVTTPGSPESGSETGTSGEFSTT) are enriched in low complexity. Composition is skewed to polar residues over residues 507 to 517 (VISGSSHTEAT) and 537 to 547 (ELSGTTIASGN). Asn547 is a glycosylation site (N-linked (GlcNAc...) asparagine). Residues 548–558 (ATTEATTSTET) show a composition bias toward low complexity. The span at 564–586 (TGAQTTVPGSQVSGSETGTSEAV) shows a compositional bias: polar residues. Positions 590–625 (AIASGSSSTGTTSGASDSQVTGSRTGTTGVVLGTTV) are enriched in low complexity. Polar residues-rich tracts occupy residues 626-635 (APGSSSTGAT) and 643-661 (GTRS…TTYE). The segment covering 671–682 (GGSGTPGSGINT) has biased composition (gly residues). 3 stretches are compositionally biased toward polar residues: residues 688–697 (QVTGIQTGTT), 706–729 (LPGS…SKTG), and 779–788 (SFNTKATTPT). Low complexity predominate over residues 790–833 (VRAATGAGTAVGATSRSTGISTGPENSTPGTTETGSGTTSSPGG). Residues 875-908 (ETTTAPRISATGSTSVSKEITASPKVSSPETTAG) are compositionally biased toward polar residues. Residues Asn917, Asn985, Asn1002, and Asn1068 are each glycosylated (N-linked (GlcNAc...) asparagine). Residues 929–995 (PVCHGPLGEE…DTCCEIGHCE (67 aa)) form the VWFC domain. 4 cysteine pairs are disulfide-bonded: Cys1062–Cys1109, Cys1076–Cys1123, Cys1085–Cys1139, and Cys1089–Cys1141. One can recognise a CTCK domain in the interval 1062–1146 (CKPSPVNVTV…TACSCLDPCQ (85 aa)).

In terms of assembly, intermolecular disulfide bonds could help maintain a multimeric mucin structure. Extensively O-glycosylated on most but not all Ser and Thr residues of the repeat units. Highest glycosylation appears to occur on Ser residues which have Gly at positions at +2 or -2 from the glycosylation site or, where Gly is the penultimate residue. The presence of proline (usually at position +3 or -3) appears to also enhance glycosylation. In terms of tissue distribution, submaxillary mucosae.

It localises to the secreted. Its function is as follows. Apomucin is part of mucin, the major glycoprotein synthesized and secreted by mucous cells of the submaxillary gland. Its highly viscous aqueous solutions serve to lubricate the oral cavity and to protect it from the external environment. The sequence is that of Apomucin from Sus scrofa (Pig).